A 954-amino-acid chain; its full sequence is Protein teashirt (954 aa).

Disordered stretches follow at residues 20-91, 167-207, and 276-331; these read LPTA…SLPS, ESAE…PQLG, and VKGG…GSGA. Residues 47 to 57 are compositionally biased toward gly residues; the sequence is HGGGAGSGGVG. The span at 292–303 shows a compositional bias: polar residues; sequence SKATTPQAASQP. Gly residues predominate over residues 318 to 328; it reads SGGGSGGGAAG. The C2H2-type 1 zinc-finger motif lies at 354–378; the sequence is FRCVWCKQSFPTLEALTTHMKDSKH. The tract at residues 383–444 is disordered; the sequence is VPPFGNLPSN…YRGDPPTPLP (62 aa). Over residues 417-428 the composition is skewed to low complexity; that stretch reads SGSASNHSPSAN. 2 consecutive C2H2-type zinc fingers follow at residues 466-490 and 533-557; these read LKCM…ETQH and LTCK…KNNH. Disordered stretches follow at residues 563-622, 689-714, and 748-935; these read LQSA…DKND, FDTP…TSPV, and TSSE…NLTA. Positions 568 to 578 are enriched in basic residues; it reads ARKRPAPKKRE. Residues 579–588 are compositionally biased toward basic and acidic residues; sequence KSLPVRKLLE. Positions 696–712 are enriched in low complexity; that stretch reads ASLPASSPSNSSTKNTS. A phosphoserine mark is found at serine 750 and serine 758. The segment covering 778–807 has biased composition (basic and acidic residues); that stretch reads GHDEESSKPAIKQEREAESKPVKMEIKSEF. Over residues 842–851 the composition is skewed to low complexity; sequence PKTPSSAASP. Composition is skewed to polar residues over residues 862–885 and 893–907; these read AESQ…GSSE and DSLN…SLGS. A compositionally biased stretch (low complexity) spans 910 to 926; that stretch reads AGANSRAKLAAAAAAGG.

It belongs to the teashirt C2H2-type zinc-finger protein family. In terms of assembly, binds arm. Shows a dynamic expression pattern during embryogenesis. Expressed in the embryonic trunk region (PS 3-13) with expression strongest in the thoracic segments. Expressed in a small group of cells corresponding to the anal tuft from stage 14. Strongly expressed in the embryonic ventral nerve cord. Also expressed in the proximal domain of the leg imaginal disk and in the region of the wing disk that will give rise to the proximal wing hinge. Expressed at high levels in the anterior and central embryonic midgut mesoderm and in the embryonic midgut endoderm. Expressed at a low level in more posterior visceral mesoderm of the gut. From stage 12 onwards, tsh and tio are colocalized in some cells of the CNS, trunk epidermis, hindgut and Malpighian tubules.

The protein resides in the nucleus. It is found in the cytoplasm. Homeotic protein that acts downstream of Arm in the Wg cascade during embryogenesis to determine segment identity throughout the entire trunk. Acts cooperatively with other trunk homeotic proteins to repress head homeotic genes and therefore repress head segmental identity. Necessary, in combination with Scr, for the formation of the prothoracic segment. Promotes eye development in the dorsal region of the eye disk and suppresses eye development in the ventral region in combination with Wg-signaling and several early dorso-ventral eye patterning genes. Required for proper development of proximal leg segments. Has differential functions along the dorso-ventral axs of the antennal and leg disks. May play a role in wing hinge development. Possible involvement in chromatin structure for modulation of transcription. Binds DNA and can act as both a transcriptional repressor and activator. Positively regulates its own expression as well as that of Dll. Negatively regulates the expression of mod. Required for Wg-mediated transcriptional repression of Ubx in the midgut. Also represses transcription of lab in the midgut and is necessary for the proper formation of anterior and central midgut structures. Tiptop (tio) and teashirt (tsh) have, on the whole, common activities. Tio and tsh repress each other's expression and tsh has a crucial role for trunk patterning that is in part masked by ectopic expression of tiptop. Both genes share a common activity required for the activation of Ser and svb and the maintenance of en and wg. The polypeptide is Protein teashirt (tsh) (Drosophila melanogaster (Fruit fly)).